A 197-amino-acid chain; its full sequence is CASP-like protein 0U1 (197 aa).

At 1-13 (MDDFDPTVTNSPK) the chain is on the cytoplasmic side. The chain crosses the membrane as a helical span at residues 14-34 (FRLIAVQCLFSITAFAAMLSQ). Topologically, residues 35–63 (RHGLAGPDEMTLEECGPQACGYQKFSNFK) are extracellular. A helical transmembrane segment spans residues 64-84 (FLIAVCIIYAVFSLVVMAAYL). At 85–99 (LQRVPPPVTELTAYT) the chain is on the cytoplasmic side. The helical transmembrane segment at 100-120 (VMNVLLFAAFAMSATSCNITI) threads the bilayer. The Extracellular portion of the chain corresponds to 121 to 135 (VDPVYPVCKRATSAK). A helical membrane pass occupies residues 136–156 (ASIAFAFFTWLAVCFSMLFTY). Over 157-197 (KEWRDVDYHVPGSGAYEFVPGVTSGSSRSSYPPQASSSSYA) the chain is Cytoplasmic. The interval 178-197 (VTSGSSRSSYPPQASSSSYA) is disordered. The segment covering 180-197 (SGSSRSSYPPQASSSSYA) has biased composition (low complexity).

The protein belongs to the Casparian strip membrane proteins (CASP) family. In terms of assembly, homodimer and heterodimers.

It is found in the cell membrane. The protein is CASP-like protein 0U1 of Micromonas commoda (strain RCC299 / NOUM17 / CCMP2709) (Picoplanktonic green alga).